The primary structure comprises 173 residues: Protein tyrosine phosphatase type IVA 3 (173 aa).

A Tyrosine-protein phosphatase domain is found at 8–161 (APVEVSYRHM…YRPKQRLRFK (154 aa)). Residues cysteine 49 and cysteine 104 are joined by a disulfide bond. Residue aspartate 72 is the Proton donor of the active site. Residue cysteine 104 is the Phosphocysteine intermediate of the active site. Residue arginine 110 coordinates substrate. Cysteine 170 carries the post-translational modification Cysteine methyl ester. The S-farnesyl cysteine moiety is linked to residue cysteine 170. Residues 171–173 (CVM) constitute a propeptide, removed in mature form.

It belongs to the protein-tyrosine phosphatase family. As to quaternary structure, interacts with tubulin. Farnesylated. Farnesylation is required for membrane targeting. Unfarnesylated forms are shifted into the nucleus. Present in the small intestine, where it is located in the differentiated epithelial cells of the villus but not in the proliferating crypt cells (at protein level). Expressed in heart and skeletal muscle, and at lower levels in lung, spleen and testis.

It localises to the cell membrane. It is found in the early endosome. It catalyses the reaction O-phospho-L-tyrosyl-[protein] + H2O = L-tyrosyl-[protein] + phosphate. Inhibited by sodium orthovanadate and peroxovanadium compounds, and by pentamidine. Its function is as follows. Protein tyrosine phosphatase which stimulates progression from G1 into S phase during mitosis. Enhances cell proliferation, cell motility and invasive activity, and promotes cancer metastasis. May be involved in the progression of cardiac hypertrophy by inhibiting intracellular calcium mobilization in response to angiotensin II. This chain is Protein tyrosine phosphatase type IVA 3 (Ptp4a3), found in Mus musculus (Mouse).